The following is a 244-amino-acid chain: Small ribosomal subunit protein eS4 (244 aa).

The S4 RNA-binding domain maps to 43–106; that stretch reads LPLLLIVRDT…NENYLVLFDE (64 aa).

Belongs to the eukaryotic ribosomal protein eS4 family.

The polypeptide is Small ribosomal subunit protein eS4 (rps4e) (Methanococcus vannielii).